We begin with the raw amino-acid sequence, 293 residues long: 4-hydroxy-tetrahydrodipicolinate synthase (293 aa).

Pyruvate is bound at residue Thr-47. The active-site Proton donor/acceptor is the Tyr-136. Catalysis depends on Lys-164, which acts as the Schiff-base intermediate with substrate. Position 206 (Ile-206) interacts with pyruvate.

The protein belongs to the DapA family. As to quaternary structure, homotetramer; dimer of dimers.

It localises to the cytoplasm. It catalyses the reaction L-aspartate 4-semialdehyde + pyruvate = (2S,4S)-4-hydroxy-2,3,4,5-tetrahydrodipicolinate + H2O + H(+). It participates in amino-acid biosynthesis; L-lysine biosynthesis via DAP pathway; (S)-tetrahydrodipicolinate from L-aspartate: step 3/4. Functionally, catalyzes the condensation of (S)-aspartate-beta-semialdehyde [(S)-ASA] and pyruvate to 4-hydroxy-tetrahydrodipicolinate (HTPA). The protein is 4-hydroxy-tetrahydrodipicolinate synthase of Listeria monocytogenes serotype 4a (strain HCC23).